Reading from the N-terminus, the 219-residue chain is Agamous-like MADS-box protein AGL19 (219 aa).

Positions 1–61 (MVRGKTEMKR…SKLYEFSSSS (61 aa)) constitute an MADS-box domain. The disordered stretch occupies residues 77–96 (GNNHKRNDNSQQARDETSGL). A K-box domain is found at 86-176 (SQQARDETSG…KEKWLGMGTA (91 aa)).

As to quaternary structure, interacts with SOC1 and AGL21. Mostly expressed in the outer layers of the root meristem (lateral root cap and epidermis) and in the central cylinder cells of mature roots. Also present in rosette leaves and seedlings and, to a lesser extent, in cauline leaves and flowers. Enriched in apices including the shoot apical meristem and developing leaf primordia.

The protein localises to the nucleus. Probable transcription factor that promotes flowering, especially in response to vernalization by short periods of cold, in an FLC-inpedendent manner. This chain is Agamous-like MADS-box protein AGL19 (AGL19), found in Arabidopsis thaliana (Mouse-ear cress).